The chain runs to 71 residues: uncharacterized protein (71 aa).

This is an uncharacterized protein from Methanocaldococcus jannaschii (strain ATCC 43067 / DSM 2661 / JAL-1 / JCM 10045 / NBRC 100440) (Methanococcus jannaschii).